The chain runs to 210 residues: Glycerol-3-phosphate acyltransferase 2 (210 aa).

Transmembrane regions (helical) follow at residues 4-24 (LIMV…PAPY), 52-72 (VGFW…ALAM), 73-93 (AVAN…LMAI), 114-134 (IGIL…CFLI), 141-161 (FPTL…WLGQ), and 163-183 (DMGK…MYIP).

This sequence belongs to the PlsY family. Probably interacts with PlsX.

Its subcellular location is the cell membrane. It catalyses the reaction an acyl phosphate + sn-glycerol 3-phosphate = a 1-acyl-sn-glycero-3-phosphate + phosphate. The protein operates within lipid metabolism; phospholipid metabolism. Functionally, catalyzes the transfer of an acyl group from acyl-phosphate (acyl-PO(4)) to glycerol-3-phosphate (G3P) to form lysophosphatidic acid (LPA). This enzyme utilizes acyl-phosphate as fatty acyl donor, but not acyl-CoA or acyl-ACP. In Dehalococcoides mccartyi (strain CBDB1), this protein is Glycerol-3-phosphate acyltransferase 2.